The following is a 486-amino-acid chain: ATP synthase subunit beta (486 aa).

164-171 lines the ATP pocket; that stretch reads GGAGVGKT.

Belongs to the ATPase alpha/beta chains family. In terms of assembly, F-type ATPases have 2 components, CF(1) - the catalytic core - and CF(0) - the membrane proton channel. CF(1) has five subunits: alpha(3), beta(3), gamma(1), delta(1), epsilon(1). CF(0) has four main subunits: a(1), b(1), b'(1) and c(9-12).

It is found in the cellular thylakoid membrane. The enzyme catalyses ATP + H2O + 4 H(+)(in) = ADP + phosphate + 5 H(+)(out). In terms of biological role, produces ATP from ADP in the presence of a proton gradient across the membrane. The catalytic sites are hosted primarily by the beta subunits. The chain is ATP synthase subunit beta from Prochlorococcus marinus subsp. pastoris (strain CCMP1986 / NIES-2087 / MED4).